We begin with the raw amino-acid sequence, 249 residues long: Diaminopimelate epimerase (249 aa).

Residues Asn-11 and Asn-60 each contribute to the substrate site. Cys-69 (proton donor) is an active-site residue. Substrate is bound by residues 70–71 (GN), Asn-164, and 182–183 (ER). The Proton acceptor role is filled by Cys-192. 193 to 194 (GT) contacts substrate.

This sequence belongs to the diaminopimelate epimerase family. In terms of assembly, homodimer.

The protein localises to the cytoplasm. It catalyses the reaction (2S,6S)-2,6-diaminopimelate = meso-2,6-diaminopimelate. Its pathway is amino-acid biosynthesis; L-lysine biosynthesis via DAP pathway; DL-2,6-diaminopimelate from LL-2,6-diaminopimelate: step 1/1. Catalyzes the stereoinversion of LL-2,6-diaminopimelate (L,L-DAP) to meso-diaminopimelate (meso-DAP), a precursor of L-lysine and an essential component of the bacterial peptidoglycan. The protein is Diaminopimelate epimerase of Campylobacter lari (strain RM2100 / D67 / ATCC BAA-1060).